A 544-amino-acid polypeptide reads, in one-letter code: MTPTELKRLYRIIKVQLEYGLDDLLPDHQLAKAPRWMRKSLFWLKNQHPEKPLGDRLRLALQELGPVWIKFGQMLSTRRDLFPPHIADPLALLQDQVSPFDGALAKAQMEQALGGPLETWFSDFDLVPLASASIAQVHTAKLKTTNQEVVLKVIRPDIRPIIDADLKLMRRMARIVAKAMPEARRLKPIEVVREYEKTLLDELDLRREAANAIQLRRNFTDSEELYVPEVYPDFSNETVMVSERIYGIQVSDIAGLKANGTNMKLLAERGVSVFFTQVFRDSFFHADMHPGNVFVNPEHPENPQWIGLDCGIVGTLNSEDKRYLAENFLAFFNRDYRRVAELHVDSGWVPADTNIDEFEFAIRIVCEPIFAKPLCEISFGHVLLNLFNTARRFNMEVQPQLVLLQKTLLYVEGLGRQLYPQLDLWETAKPFLEEWMMNQVGPKALINAIKDRAPYWAEKLPELPELLYDSLKQGKAMNQRMDQLYQGYRASKRQQATGKFLFGVGATLVVCSAILVDHTYEQLSLATAIAGVTFWLFSWRAYRR.

The region spanning 123-501 (DFDLVPLASA…KRQQATGKFL (379 aa)) is the Protein kinase domain. ATP contacts are provided by residues 129 to 137 (LASASIAQV) and Lys-152. Asp-287 functions as the Proton acceptor in the catalytic mechanism. 2 helical membrane-spanning segments follow: residues 496 to 516 (ATGK…AILV) and 519 to 539 (TYEQ…LFSW).

The protein belongs to the ABC1 family. UbiB subfamily.

The protein localises to the cell inner membrane. The protein operates within cofactor biosynthesis; ubiquinone biosynthesis [regulation]. Is probably a protein kinase regulator of UbiI activity which is involved in aerobic coenzyme Q (ubiquinone) biosynthesis. The polypeptide is Probable protein kinase UbiB (Vibrio vulnificus (strain CMCP6)).